Here is a 516-residue protein sequence, read N- to C-terminus: L-amino-acid oxidase (516 aa).

An N-terminal signal peptide occupies residues 1–18 (MNVFFMFSLLFLAALGSC). An intrachain disulfide couples Cys28 to Cys189. Residues 61–62 (MA), 81–82 (EA), Arg89, and 103–106 (GPMR) contribute to the FAD site. The substrate site is built by Arg106 and His239. Val279 contributes to the FAD binding site. Cys349 and Cys430 are oxidised to a cystine. An N-linked (GlcNAc...) asparagine glycan is attached at Asn379. Residue Tyr390 coordinates substrate. FAD-binding positions include Glu475 and 482–487 (GWIDST). 482-483 (GW) contributes to the substrate binding site.

The protein belongs to the flavin monoamine oxidase family. FIG1 subfamily. In terms of assembly, homodimer; non-covalently linked. It depends on FAD as a cofactor. In terms of tissue distribution, expressed by the venom gland.

It is found in the secreted. The catalysed reaction is an L-alpha-amino acid + O2 + H2O = a 2-oxocarboxylate + H2O2 + NH4(+). Catalyzes an oxidative deamination of predominantly hydrophobic and aromatic L-amino acids, thus producing hydrogen peroxide that may contribute to the diverse toxic effects of this enzyme. Exhibits diverse biological activities, such as hemolysis, edema, hemorrhage, apoptosis, antibacterial and antiparasitic activities, as well as regulation of platelet aggregation. Effects of snake L-amino oxidases on platelets are controversial, since they either induce aggregation or inhibit agonist-induced aggregation. These different effects are probably due to different experimental conditions. The protein is L-amino-acid oxidase of Crotalus adamanteus (Eastern diamondback rattlesnake).